A 469-amino-acid chain; its full sequence is MTIRAGSLDRRTLLRGAIATAAMGSFAVACSSPSSEDKESDSGPKGEKSANNPFGAAANSTVEAAIFDGGYGTDYVDYANQVLGSQVKGLKVQVKPVVDIAPQLQPRFVGGNPPDLIDNSGEDQIGFLGILDQLEELDDLFEASTYEGKKIADIVYPGVKDPGTFKDKFVALNYVMTVYGVWYSKTLFEENGWTPPKTWDEALDLGQEAKKKGKYLFVHGKEAATYYRTLLIDSAIKEGGDEVRLALENLEKGCWSHPAVQGVIKVMETMVKQKMFVPGGSGTQFQKAQAIWSNDQKALLYPSGGWIENEMKKATKADFQMTGIPSMTLTDKPALPYEALRAAAGEPFIVPKQGKNPAGGKEVLRAMLSEKAAANFSKTKLAPTIVKGTVPADGYGSTALVSQTKMLEAAGTNIFNYMFVETYGLNTDQLVPWNSFLAGDLDGKGLTSALQKISDKVREDDSVDKVKVS.

The tat-type signal signal peptide spans 1-37 (MTIRAGSLDRRTLLRGAIATAAMGSFAVACSSPSSED). The interval 30-54 (CSSPSSEDKESDSGPKGEKSANNPF) is disordered. Residues 35–48 (SEDKESDSGPKGEK) are compositionally biased toward basic and acidic residues.

This sequence belongs to the bacterial solute-binding protein 1 family. In terms of assembly, the complex is composed of two ATP-binding proteins (MsiK), two transmembrane proteins (NgcF and NgcG) and a solute-binding protein (NgcE). In terms of processing, predicted to be exported by the Tat system. The position of the signal peptide cleavage has not been experimentally proven.

The protein localises to the cell membrane. Functionally, part of the ABC transporter complex NgcEFG-MsiK involved in N,N'-diacetylchitobiose ((GlcNAc)2) uptake. Binds (GlcNAc)2. Can also bind GlcNAc. The polypeptide is Diacetylchitobiose binding protein NgcE (Streptomyces coelicolor (strain ATCC BAA-471 / A3(2) / M145)).